The primary structure comprises 538 residues: ATP synthase subunit beta 2 (538 aa).

Polar residues predominate over residues 1-10; sequence MADPQATNGT. The interval 1–30 is disordered; that stretch reads MADPQATNGTGAACAERDASDVGDVSDVGD. Residue 185–192 coordinates ATP; sequence GGAGVGKT. A compositionally biased stretch (basic and acidic residues) spans 494–505; the sequence is AAAREADARREA. The disordered stretch occupies residues 494-538; sequence AAAREADARREAAAAASVAGPGTTSGTTSDPASGSAEPQGARHGR. A compositionally biased stretch (low complexity) spans 506 to 529; the sequence is AAAASVAGPGTTSGTTSDPASGSA.

This sequence belongs to the ATPase alpha/beta chains family. F-type ATPases have 2 components, CF(1) - the catalytic core - and CF(0) - the membrane proton channel. CF(1) has five subunits: alpha(3), beta(3), gamma(1), delta(1), epsilon(1). CF(0) has three main subunits: a(1), b(2) and c(9-12). The alpha and beta chains form an alternating ring which encloses part of the gamma chain. CF(1) is attached to CF(0) by a central stalk formed by the gamma and epsilon chains, while a peripheral stalk is formed by the delta and b chains.

It localises to the cell inner membrane. It catalyses the reaction ATP + H2O + 4 H(+)(in) = ADP + phosphate + 5 H(+)(out). Produces ATP from ADP in the presence of a proton gradient across the membrane. The catalytic sites are hosted primarily by the beta subunits. The chain is ATP synthase subunit beta 2 from Burkholderia pseudomallei (strain K96243).